We begin with the raw amino-acid sequence, 428 residues long: Bacteriochlorophyll synthase 44.5 kDa chain (428 aa).

A run of 12 helical transmembrane segments spans residues 3–23 (LGWLQIFRLGLVQLCIGAVVV), 32–52 (LMVVELALPAVLPGALVALHY), 73–93 (FFVILGMAVLALGAFLAAVAV), 115–135 (GFGVGASGTSLLALLASATEP), 144–164 (ITWLLMIFGIAVTAGTVGHFL), 172–192 (LLWIVAIVTLGAVVLTTLAVW), 225–245 (AFTFFLFLSMTAYFLQELILE), 269–289 (GVFFGMLTVGLALSGLKIGSL), 291–311 (GWVVTGCLGSSLALMAIVALG), 317–337 (ALVPAVIGLGFFNGIFAVAAI), 358–378 (LWGAAQAIAAGFGGLVGAGAA), and 393–413 (LVFGAQALLFIVAAMMATGVV).

This sequence belongs to the PucC family.

The protein localises to the membrane. The protein operates within porphyrin-containing compound metabolism; bacteriochlorophyll biosynthesis (light-independent). The sequence is that of Bacteriochlorophyll synthase 44.5 kDa chain from Rhodobacter capsulatus (strain ATCC BAA-309 / NBRC 16581 / SB1003).